A 171-amino-acid polypeptide reads, in one-letter code: Secreted protein CSS3 (171 aa).

The signal sequence occupies residues 1–20 (MVPLFGLFCIFSQLYSLCSA). 3 N-linked (GlcNAc...) asparagine glycosylation sites follow: Asn37, Asn139, and Asn159.

Its subcellular location is the cytoplasm. It is found in the secreted. This Saccharomyces cerevisiae (strain ATCC 204508 / S288c) (Baker's yeast) protein is Secreted protein CSS3.